The chain runs to 705 residues: Putative membrane protein SCO0839 (705 aa).

12 consecutive transmembrane segments (helical) span residues 16–36 (WLVP…LGPY), 177–197 (GIDG…LLLV), 202–222 (LLPL…CAIV), 237–257 (VQGI…LLLT), 281–301 (SWGA…ALLL), 316–336 (IGIV…LVLL), 373–393 (IWAL…TLSS), 529–549 (LIVP…LRSL), 554–574 (LLVA…ALVF), 587–607 (VPLY…IFLM), 627–647 (LTAT…TFAA), and 648–668 (LGVI…FGVL).

The protein belongs to the resistance-nodulation-cell division (RND) (TC 2.A.6) family. MmpL subfamily.

The protein localises to the cell membrane. The polypeptide is Putative membrane protein SCO0839 (Streptomyces coelicolor (strain ATCC BAA-471 / A3(2) / M145)).